The primary structure comprises 981 residues: Probable NAD kinase 2, chloroplastic (981 aa).

The calmodulin-binding stretch occupies residues 319-364; the sequence is APSAEQVQRFAEIVSDSAKKPIYLHSQEGISRTSAMVSRWKQYVTR. 2 disordered regions span residues 369–413 and 551–601; these read ATQN…DRTM and TNGK…AERN. Composition is skewed to polar residues over residues 387–406, 551–563, and 581–596; these read TEQLTNSPGFSSEGSENGTP, TNGKPSNNGASTS, and SDTSNSNGNAPLGSQK.

The protein belongs to the NAD kinase family.

The protein resides in the plastid. It is found in the chloroplast. It catalyses the reaction NAD(+) + ATP = ADP + NADP(+) + H(+). Involved in chlorophyll synthesis and chloroplast protection against oxidative damage. The sequence is that of Probable NAD kinase 2, chloroplastic from Oryza sativa subsp. japonica (Rice).